We begin with the raw amino-acid sequence, 305 residues long: Ornithine carbamoyltransferase, anabolic (305 aa).

Carbamoyl phosphate is bound by residues 53-56 (STRT), Gln-80, Arg-104, and 131-134 (HPCQ). Residues Asn-162, Asp-219, and 223 to 224 (SM) each bind L-ornithine. Carbamoyl phosphate is bound by residues 259–260 (CL) and Arg-287.

The protein belongs to the aspartate/ornithine carbamoyltransferase superfamily. OTCase family. Homotrimer.

The protein resides in the cytoplasm. It carries out the reaction carbamoyl phosphate + L-ornithine = L-citrulline + phosphate + H(+). It participates in amino-acid biosynthesis; L-arginine biosynthesis; L-arginine from L-ornithine and carbamoyl phosphate: step 1/3. In terms of biological role, reversibly catalyzes the transfer of the carbamoyl group from carbamoyl phosphate (CP) to the N(epsilon) atom of ornithine (ORN) to produce L-citrulline, which is a substrate for argininosuccinate synthetase (ArgG) involved in the final step in arginine biosynthesis. The sequence is that of Ornithine carbamoyltransferase, anabolic from Pseudomonas aeruginosa (strain ATCC 15692 / DSM 22644 / CIP 104116 / JCM 14847 / LMG 12228 / 1C / PRS 101 / PAO1).